Reading from the N-terminus, the 147-residue chain is D-aminoacyl-tRNA deacylase (147 aa).

The Gly-cisPro motif, important for rejection of L-amino acids signature appears at 136–137; the sequence is GP.

This sequence belongs to the DTD family. In terms of assembly, homodimer.

The protein localises to the cytoplasm. It catalyses the reaction glycyl-tRNA(Ala) + H2O = tRNA(Ala) + glycine + H(+). The enzyme catalyses a D-aminoacyl-tRNA + H2O = a tRNA + a D-alpha-amino acid + H(+). In terms of biological role, an aminoacyl-tRNA editing enzyme that deacylates mischarged D-aminoacyl-tRNAs. Also deacylates mischarged glycyl-tRNA(Ala), protecting cells against glycine mischarging by AlaRS. Acts via tRNA-based rather than protein-based catalysis; rejects L-amino acids rather than detecting D-amino acids in the active site. By recycling D-aminoacyl-tRNA to D-amino acids and free tRNA molecules, this enzyme counteracts the toxicity associated with the formation of D-aminoacyl-tRNA entities in vivo and helps enforce protein L-homochirality. This Streptococcus pneumoniae serotype 2 (strain D39 / NCTC 7466) protein is D-aminoacyl-tRNA deacylase.